The chain runs to 589 residues: Aspartate--tRNA ligase (589 aa).

Glu174 lines the L-aspartate pocket. Positions 198–201 are aspartate; that stretch reads QLFK. An L-aspartate-binding site is contributed by Arg220. Residues 220–222 and Gln229 contribute to the ATP site; that span reads RDE. His448 is an L-aspartate binding site. Position 483 (Glu483) interacts with ATP. Residue Arg490 participates in L-aspartate binding. Residue 535–538 participates in ATP binding; sequence GIDR.

Belongs to the class-II aminoacyl-tRNA synthetase family. Type 1 subfamily. Homodimer.

The protein localises to the cytoplasm. The catalysed reaction is tRNA(Asp) + L-aspartate + ATP = L-aspartyl-tRNA(Asp) + AMP + diphosphate. Its function is as follows. Catalyzes the attachment of L-aspartate to tRNA(Asp) in a two-step reaction: L-aspartate is first activated by ATP to form Asp-AMP and then transferred to the acceptor end of tRNA(Asp). This Xylella fastidiosa (strain 9a5c) protein is Aspartate--tRNA ligase.